We begin with the raw amino-acid sequence, 252 residues long: Trans-aconitate 2-methyltransferase (252 aa).

Belongs to the methyltransferase superfamily. Tam family.

The protein resides in the cytoplasm. The catalysed reaction is trans-aconitate + S-adenosyl-L-methionine = (E)-3-(methoxycarbonyl)pent-2-enedioate + S-adenosyl-L-homocysteine. Catalyzes the S-adenosylmethionine monomethyl esterification of trans-aconitate. The chain is Trans-aconitate 2-methyltransferase from Shigella flexneri serotype 5b (strain 8401).